An 82-amino-acid polypeptide reads, in one-letter code: Cyclin-dependent protein kinase inhibitor SMR5 (82 aa).

The interval 1 to 26 (MEEKNYDDGDTVTVDDDYQMGCTTPT) is disordered. Acidic residues predominate over residues 8–18 (DGDTVTVDDDY).

Interacts with CDKA-1 and D-type cyclins. In terms of tissue distribution, expressed in columella cells in the roots and in root meristems after induction.

Probable cyclin-dependent protein kinase (CDK) inhibitor that functions as a repressor of mitosis in the endoreduplication cell cycle. Acts as a potent cell cycle inhibitor, regulating a hydroxyurea-dependent checkpoint in leaves. Essential to activate a high-light-dependent cell cycle checkpoint. The polypeptide is Cyclin-dependent protein kinase inhibitor SMR5 (Arabidopsis thaliana (Mouse-ear cress)).